Consider the following 229-residue polypeptide: Potassium/proton antiporter CemA (229 aa).

4 helical membrane passes run 7–27, 107–127, 154–174, and 189–209; these read FNPL…SFSF, ILNF…YILG, ILLL…ELMI, and IISG…KYLI.

The protein belongs to the CemA family.

It localises to the plastid. Its subcellular location is the chloroplast inner membrane. The catalysed reaction is K(+)(in) + H(+)(out) = K(+)(out) + H(+)(in). Contributes to K(+)/H(+) antiport activity by supporting proton efflux to control proton extrusion and homeostasis in chloroplasts in a light-dependent manner to modulate photosynthesis. Prevents excessive induction of non-photochemical quenching (NPQ) under continuous-light conditions. Indirectly promotes efficient inorganic carbon uptake into chloroplasts. This Ranunculus macranthus (Large buttercup) protein is Potassium/proton antiporter CemA.